Consider the following 392-residue polypeptide: Tryptophan synthase beta chain (392 aa).

Lys86 is subject to N6-(pyridoxal phosphate)lysine.

Belongs to the TrpB family. As to quaternary structure, tetramer of two alpha and two beta chains. Requires pyridoxal 5'-phosphate as cofactor.

It catalyses the reaction (1S,2R)-1-C-(indol-3-yl)glycerol 3-phosphate + L-serine = D-glyceraldehyde 3-phosphate + L-tryptophan + H2O. The protein operates within amino-acid biosynthesis; L-tryptophan biosynthesis; L-tryptophan from chorismate: step 5/5. In terms of biological role, the beta subunit is responsible for the synthesis of L-tryptophan from indole and L-serine. The protein is Tryptophan synthase beta chain of Methanocorpusculum labreanum (strain ATCC 43576 / DSM 4855 / Z).